The chain runs to 248 residues: Pyruvate formate-lyase-activating enzyme (248 aa).

The 232-residue stretch at 17 to 248 folds into the Radical SAM core domain; the sequence is VDGPGIRFIV…NKILETSSYK (232 aa). [4Fe-4S] cluster contacts are provided by Cys-31, Cys-35, and Cys-38. S-adenosyl-L-methionine is bound by residues 37–39, Gly-80, 135–137, and His-208; these read FCH and DIK.

Belongs to the organic radical-activating enzymes family. Requires [4Fe-4S] cluster as cofactor.

The protein resides in the cytoplasm. It carries out the reaction glycyl-[formate C-acetyltransferase] + reduced [flavodoxin] + S-adenosyl-L-methionine = glycin-2-yl radical-[formate C-acetyltransferase] + semiquinone [flavodoxin] + 5'-deoxyadenosine + L-methionine + H(+). Functionally, activation of pyruvate formate-lyase under anaerobic conditions by generation of an organic free radical, using S-adenosylmethionine and reduced flavodoxin as cosubstrates to produce 5'-deoxy-adenosine. The chain is Pyruvate formate-lyase-activating enzyme (pflA) from Listeria innocua serovar 6a (strain ATCC BAA-680 / CLIP 11262).